We begin with the raw amino-acid sequence, 95 residues long: Class II hydrophobin 3 (95 aa).

Residues 1–16 form the signal peptide; the sequence is MKLLAVAALLAGAAIA. Cystine bridges form between Cys28/Cys77, Cys38/Cys68, Cys39/Cys51, and Cys78/Cys89.

The protein belongs to the cerato-ulmin hydrophobin family.

The protein resides in the secreted. It is found in the cell wall. Its function is as follows. Aerial growth, conidiation, and dispersal of filamentous fungi in the environment rely upon a capability of their secreting small amphipathic proteins called hydrophobins (HPBs) with low sequence identity. Class I can self-assemble into an outermost layer of rodlet bundles on aerial cell surfaces, conferring cellular hydrophobicity that supports fungal growth, development and dispersal; whereas Class II form highly ordered films at water-air interfaces through intermolecular interactions but contribute nothing to the rodlet structure. Hyd3 plays a neglectable role in hyphal growth and asexual development and does not seem involved in cellular hydrophobicity, conidial adhesion, stress tolerance nor insect pathogenicity. The chain is Class II hydrophobin 3 from Metarhizium robertsii (strain ARSEF 23 / ATCC MYA-3075) (Metarhizium anisopliae (strain ARSEF 23)).